Reading from the N-terminus, the 267-residue chain is 3-methyl-2-oxobutanoate hydroxymethyltransferase (267 aa).

Residues D46 and D85 each coordinate Mg(2+). 3-methyl-2-oxobutanoate-binding positions include 46–47, D85, and K115; that span reads DS. Mg(2+) is bound at residue E117. The Proton acceptor role is filled by E184.

This sequence belongs to the PanB family. As to quaternary structure, homodecamer; pentamer of dimers. It depends on Mg(2+) as a cofactor.

The protein resides in the cytoplasm. The enzyme catalyses 3-methyl-2-oxobutanoate + (6R)-5,10-methylene-5,6,7,8-tetrahydrofolate + H2O = 2-dehydropantoate + (6S)-5,6,7,8-tetrahydrofolate. Its pathway is cofactor biosynthesis; (R)-pantothenate biosynthesis; (R)-pantoate from 3-methyl-2-oxobutanoate: step 1/2. Its function is as follows. Catalyzes the reversible reaction in which hydroxymethyl group from 5,10-methylenetetrahydrofolate is transferred onto alpha-ketoisovalerate to form ketopantoate. The polypeptide is 3-methyl-2-oxobutanoate hydroxymethyltransferase (Citrifermentans bemidjiense (strain ATCC BAA-1014 / DSM 16622 / JCM 12645 / Bem) (Geobacter bemidjiensis)).